The chain runs to 381 residues: Putative 8-amino-7-oxononanoate synthase (381 aa).

Arg-22 is a binding site for substrate. Residue 109 to 110 coordinates pyridoxal 5'-phosphate; that stretch reads GF. Substrate is bound at residue His-134. Pyridoxal 5'-phosphate contacts are provided by residues Ser-182, 207-210, and 233-236; these read DDAH and TLSK. Lys-236 is modified (N6-(pyridoxal phosphate)lysine). Residue Thr-345 coordinates substrate.

It belongs to the class-II pyridoxal-phosphate-dependent aminotransferase family. BioF subfamily. In terms of assembly, homodimer. It depends on pyridoxal 5'-phosphate as a cofactor.

The enzyme catalyses 6-carboxyhexanoyl-[ACP] + L-alanine + H(+) = (8S)-8-amino-7-oxononanoate + holo-[ACP] + CO2. The protein operates within cofactor biosynthesis; biotin biosynthesis. Functionally, catalyzes the decarboxylative condensation of pimeloyl-[acyl-carrier protein] and L-alanine to produce 8-amino-7-oxononanoate (AON), [acyl-carrier protein], and carbon dioxide. This is Putative 8-amino-7-oxononanoate synthase (bioF) from Acidiphilium cryptum (strain JF-5).